Consider the following 170-residue polypeptide: Phosphopantetheine adenylyltransferase (170 aa).

Thr-17 contributes to the substrate binding site. ATP contacts are provided by residues 17 to 18 and His-25; that span reads TF. 3 residues coordinate substrate: Lys-49, Leu-81, and Arg-95. ATP contacts are provided by residues 96 to 98, Glu-106, and 131 to 137; these read GLR and LMYISST.

The protein belongs to the bacterial CoaD family. Homohexamer. It depends on Mg(2+) as a cofactor.

Its subcellular location is the cytoplasm. The enzyme catalyses (R)-4'-phosphopantetheine + ATP + H(+) = 3'-dephospho-CoA + diphosphate. Its pathway is cofactor biosynthesis; coenzyme A biosynthesis; CoA from (R)-pantothenate: step 4/5. In terms of biological role, reversibly transfers an adenylyl group from ATP to 4'-phosphopantetheine, yielding dephospho-CoA (dPCoA) and pyrophosphate. The chain is Phosphopantetheine adenylyltransferase from Legionella pneumophila subsp. pneumophila (strain Philadelphia 1 / ATCC 33152 / DSM 7513).